Consider the following 267-residue polypeptide: 5'-methylthioadenosine nucleosidase (267 aa).

Glu38 functions as the Proton acceptor in the catalytic mechanism. S-methyl-5'-thioadenosine contacts are provided by residues Thr116, 199-202 (KDME), and Asp225. Positions 199 and 225 each coordinate adenine. Asp225 (proton donor) is an active-site residue.

It belongs to the PNP/UDP phosphorylase family. MtnN subfamily. Homodimer. Interacts with CBL3 in a calcium-dependent manner. As to expression, expressed in roots, leaves, stems, cauline leaves and flowers.

The enzyme catalyses S-methyl-5'-thioadenosine + H2O = 5-(methylsulfanyl)-D-ribose + adenine. It functions in the pathway amino-acid biosynthesis; L-methionine biosynthesis via salvage pathway; S-methyl-5-thio-alpha-D-ribose 1-phosphate from S-methyl-5'-thioadenosine (hydrolase route): step 1/2. With respect to regulation, inhibited by CBL3 in a calcium-dependent manner. Inhibited by 5'-methylthiotubercidin (MTT) and by formycin A (FMA). In terms of biological role, enzyme of the methionine cycle that catalyzes the irreversible cleavage of the glycosidic bond in 5'-methylthioadenosine (MTA) to adenine and 5'-methylthioribose. Contributes to the maintenance of AdoMet homeostasis and is required to sustain high rates of ethylene synthesis. Inactive towards S-adenosylhomocysteine (SAH/AdoHcy). In Arabidopsis thaliana (Mouse-ear cress), this protein is 5'-methylthioadenosine nucleosidase (MTN1).